We begin with the raw amino-acid sequence, 725 residues long: Ribosomal RNA large subunit methyltransferase K/L (725 aa).

One can recognise a THUMP domain in the interval 46 to 157; that stretch reads VAYRLCLWSR…RGQATLSLDL (112 aa).

It belongs to the methyltransferase superfamily. RlmKL family.

It is found in the cytoplasm. It catalyses the reaction guanosine(2445) in 23S rRNA + S-adenosyl-L-methionine = N(2)-methylguanosine(2445) in 23S rRNA + S-adenosyl-L-homocysteine + H(+). The catalysed reaction is guanosine(2069) in 23S rRNA + S-adenosyl-L-methionine = N(2)-methylguanosine(2069) in 23S rRNA + S-adenosyl-L-homocysteine + H(+). Specifically methylates the guanine in position 2445 (m2G2445) and the guanine in position 2069 (m7G2069) of 23S rRNA. The chain is Ribosomal RNA large subunit methyltransferase K/L from Pseudomonas aeruginosa (strain ATCC 15692 / DSM 22644 / CIP 104116 / JCM 14847 / LMG 12228 / 1C / PRS 101 / PAO1).